The chain runs to 177 residues: Large ribosomal subunit protein eL20 (177 aa).

Belongs to the eukaryotic ribosomal protein eL20 family.

In Drosophila melanogaster (Fruit fly), this protein is Large ribosomal subunit protein eL20 (RpL18A).